Reading from the N-terminus, the 533-residue chain is Probable DNA ligase (533 aa).

Glutamate 211 contributes to the ATP binding site. Lysine 213 functions as the N6-AMP-lysine intermediate in the catalytic mechanism. Arginine 218, arginine 233, glutamate 262, phenylalanine 302, arginine 374, and lysine 380 together coordinate ATP. Positions 512-533 are disordered; sequence LAGEAAEKGQAEGGGEELEDDG.

It belongs to the ATP-dependent DNA ligase family. Requires Mg(2+) as cofactor.

It carries out the reaction ATP + (deoxyribonucleotide)n-3'-hydroxyl + 5'-phospho-(deoxyribonucleotide)m = (deoxyribonucleotide)n+m + AMP + diphosphate.. In terms of biological role, DNA ligase that seals nicks in double-stranded DNA during DNA replication, DNA recombination and DNA repair. The protein is Probable DNA ligase of Sorangium cellulosum (strain So ce56) (Polyangium cellulosum (strain So ce56)).